We begin with the raw amino-acid sequence, 197 residues long: Phosphoheptose isomerase (197 aa).

Residues 36–197 (MVNALLNEGK…IDSQLFGSEE (162 aa)) enclose the SIS domain. 51 to 53 (NGG) is a substrate binding site. Zn(2+) is bound by residues His60 and Glu64. Residues Glu64, 93–94 (ND), 119–121 (STS), Ser124, and Gln174 contribute to the substrate site. 2 residues coordinate Zn(2+): Gln174 and His182.

Belongs to the SIS family. GmhA subfamily. As to quaternary structure, homotetramer. Requires Zn(2+) as cofactor.

The protein localises to the cytoplasm. It carries out the reaction 2 D-sedoheptulose 7-phosphate = D-glycero-alpha-D-manno-heptose 7-phosphate + D-glycero-beta-D-manno-heptose 7-phosphate. The protein operates within carbohydrate biosynthesis; D-glycero-D-manno-heptose 7-phosphate biosynthesis; D-glycero-alpha-D-manno-heptose 7-phosphate and D-glycero-beta-D-manno-heptose 7-phosphate from sedoheptulose 7-phosphate: step 1/1. Functionally, catalyzes the isomerization of sedoheptulose 7-phosphate in D-glycero-D-manno-heptose 7-phosphate. The polypeptide is Phosphoheptose isomerase (Pseudomonas fluorescens (strain SBW25)).